Reading from the N-terminus, the 65-residue chain is Large ribosomal subunit protein bL35 (65 aa).

A disordered region spans residues 1 to 26; sequence MPKIKTVRGAAKRFKKTASGGFKRKQ. The segment covering 10-26 has biased composition (basic residues); sequence AAKRFKKTASGGFKRKQ.

This sequence belongs to the bacterial ribosomal protein bL35 family.

This Actinobacillus succinogenes (strain ATCC 55618 / DSM 22257 / CCUG 43843 / 130Z) protein is Large ribosomal subunit protein bL35.